The primary structure comprises 280 residues: MPLLTQYNEEEYEQYCLVASLDNVRNLSTVLKAIHFREHATCFATKNGIKVTVENAKCVQANAFIQADVFQEFVIQEESVTFRINLTILLDCLSIFGSSPTPGTLTALRMCYQGYGHPLMLFLEEGGVVTVCKITTQEPEETLDFDFCSTNVMNKIILQSEGLREAFSELDMTGDVLQITVSPDKPYFRLSTFGNAGNSHLDYPKDSDLVEAFHCDKTQVNRYKLSLLKPSTKALALSCKVSIRTDNRGFLSLQYMIRNEDGQICFVEYYCCPDEEVPES.

This sequence belongs to the rad1 family. Component of the toroidal 9-1-1 (RAD9-RAD1-HUS1) complex, composed of RAD9A, RAD1 and HUS1. The 9-1-1 complex associates with LIG1, POLB, FEN1, RAD17, HDAC1, RPA1 and RPA2. The 9-1-1 complex associates with the RAD17-RFC complex. RAD1 interacts with POLB, FEN1, HUS1, HUS1B, RAD9A and RAD9B. Interacts with DNAJC7. Interacts with RHNO1; interaction is direct. In terms of tissue distribution, expressed in testis, uterus, bladder, spleen, ovaries, lung, brain and muscle (at protein level). Expressed in brain, testis, kidney, heart, liver and lung.

It localises to the nucleus. Its function is as follows. Component of the 9-1-1 cell-cycle checkpoint response complex that plays a major role in DNA repair. The 9-1-1 complex is recruited to DNA lesion upon damage by the RAD17-replication factor C (RFC) clamp loader complex. Acts then as a sliding clamp platform on DNA for several proteins involved in long-patch base excision repair (LP-BER). The 9-1-1 complex stimulates DNA polymerase beta (POLB) activity by increasing its affinity for the 3'-OH end of the primer-template and stabilizes POLB to those sites where LP-BER proceeds; endonuclease FEN1 cleavage activity on substrates with double, nick, or gap flaps of distinct sequences and lengths; and DNA ligase I (LIG1) on long-patch base excision repair substrates. The 9-1-1 complex is necessary for the recruitment of RHNO1 to sites of double-stranded breaks (DSB) occurring during the S phase. The sequence is that of Cell cycle checkpoint protein RAD1 (Rad1) from Mus musculus (Mouse).